The chain runs to 494 residues: MRIMAVRLVAGAITLALMAYAWLAWERARDPEPITILERVLERGELRVITRISATTYYQTDKGRAGLEFELAQAFAHRLGVQLRMLVAPDLEAIFAALDDGEADLAAAGLTYTESRGQRYWFTPPYKDITQQLVYRVGTPRPDDLSEIGPGELAVIANSSHADRLRELRNRSHPDLTWAEDEHADSEAMLYRVWNEELRYTVADSHELSINRAYYPELRKAFEISGVEGLAWAFPRTEDLSLYNEAARYFTDLRLEGTLSTLLEEHFGHLGRFDYVGFRAFNRHVADRLPRYRHWFEEAAEEYGVDWRLLAAIGYQESHWDPQAVSPTGVRGIMMLTLDTASMLGVDNRLDPKQSIFGGARYFSRLLERLPEDIEEPHRAWMALAAYNVGYGHLQDARRLARQRGYDPNDWRVIRDHLPLLSQRQWYVQTRHGYARGWEPVHYVRNIRLYYQLLQRITEPGRRQVPAGEALGEPPLPTPPAPPGAPLPADPPAD.

The first 24 residues, 1–24 (MRIMAVRLVAGAITLALMAYAWLA), serve as a signal peptide directing secretion. Residues 25 to 270 (WERARDPEPI…TLLEEHFGHL (246 aa)) are non-LT domain. Residues 271 to 494 (GRFDYVGFRA…APLPADPPAD (224 aa)) form an LT domain region. Glu317 is an active-site residue. The interval 464-494 (QVPAGEALGEPPLPTPPAPPGAPLPADPPAD) is disordered. The span at 474 to 494 (PPLPTPPAPPGAPLPADPPAD) shows a compositional bias: pro residues.

In the N-terminal section; belongs to the bacterial solute-binding protein 3 family. This sequence in the C-terminal section; belongs to the transglycosylase Slt family.

It localises to the cell outer membrane. It catalyses the reaction Exolytic cleavage of the (1-&gt;4)-beta-glycosidic linkage between N-acetylmuramic acid (MurNAc) and N-acetylglucosamine (GlcNAc) residues in peptidoglycan, from either the reducing or the non-reducing ends of the peptidoglycan chains, with concomitant formation of a 1,6-anhydrobond in the MurNAc residue.. In terms of biological role, murein-degrading enzyme that degrades murein glycan strands and insoluble, high-molecular weight murein sacculi, with the concomitant formation of a 1,6-anhydromuramoyl product. Lytic transglycosylases (LTs) play an integral role in the metabolism of the peptidoglycan (PG) sacculus. Their lytic action creates space within the PG sacculus to allow for its expansion as well as for the insertion of various structures such as secretion systems and flagella. In Alkalilimnicola ehrlichii (strain ATCC BAA-1101 / DSM 17681 / MLHE-1), this protein is Membrane-bound lytic murein transglycosylase F 1.